Reading from the N-terminus, the 92-residue chain is Ribonuclease P protein component 1 (92 aa).

This sequence belongs to the eukaryotic/archaeal RNase P protein component 1 family. As to quaternary structure, consists of a catalytic RNA component and at least 4-5 protein subunits.

It is found in the cytoplasm. It catalyses the reaction Endonucleolytic cleavage of RNA, removing 5'-extranucleotides from tRNA precursor.. Its function is as follows. Part of ribonuclease P, a protein complex that generates mature tRNA molecules by cleaving their 5'-ends. The sequence is that of Ribonuclease P protein component 1 from Staphylothermus marinus (strain ATCC 43588 / DSM 3639 / JCM 9404 / F1).